We begin with the raw amino-acid sequence, 255 residues long: Small ribosomal subunit protein eS1B (255 aa).

The residue at position 2 (alanine 2) is an N-acetylalanine; partial. A Phosphoserine modification is found at serine 245. Residue lysine 248 forms a Glycyl lysine isopeptide (Lys-Gly) (interchain with G-Cter in ubiquitin) linkage. The residue at position 254 (threonine 254) is a Phosphothreonine.

It belongs to the eukaryotic ribosomal protein eS1 family. In terms of assembly, component of the small ribosomal subunit. Mature ribosomes consist of a small (40S) and a large (60S) subunit. The 40S subunit contains about 33 different proteins and 1 molecule of RNA (18S). The 60S subunit contains about 49 different proteins and 3 molecules of RNA (25S, 5.8S and 5S).

It localises to the cytoplasm. This Saccharomyces cerevisiae (strain RM11-1a) (Baker's yeast) protein is Small ribosomal subunit protein eS1B.